The chain runs to 357 residues: Protein-glutamate methylesterase/protein-glutamine glutaminase (357 aa).

Residues 3 to 120 (RVLVVDDSAF…SIDLYKVRDM (118 aa)) form the Response regulatory domain. 4-aspartylphosphate is present on Asp-54. Positions 161 to 355 (FRAGKQLICI…AAIMTYMKKE (195 aa)) constitute a CheB-type methylesterase domain. Residues Ser-173, His-200, and Asp-296 contribute to the active site.

The protein belongs to the CheB family. Post-translationally, phosphorylated by CheA. Phosphorylation of the N-terminal regulatory domain activates the methylesterase activity.

The protein resides in the cytoplasm. The catalysed reaction is [protein]-L-glutamate 5-O-methyl ester + H2O = L-glutamyl-[protein] + methanol + H(+). The enzyme catalyses L-glutaminyl-[protein] + H2O = L-glutamyl-[protein] + NH4(+). Functionally, involved in chemotaxis. Part of a chemotaxis signal transduction system that modulates chemotaxis in response to various stimuli. Catalyzes the demethylation of specific methylglutamate residues introduced into the chemoreceptors (methyl-accepting chemotaxis proteins or MCP) by CheR. Also mediates the irreversible deamidation of specific glutamine residues to glutamic acid. This Bacillus licheniformis (strain ATCC 14580 / DSM 13 / JCM 2505 / CCUG 7422 / NBRC 12200 / NCIMB 9375 / NCTC 10341 / NRRL NRS-1264 / Gibson 46) protein is Protein-glutamate methylesterase/protein-glutamine glutaminase.